A 313-amino-acid polypeptide reads, in one-letter code: Methionyl-tRNA formyltransferase (313 aa).

109–112 (SLLP) provides a ligand contact to (6S)-5,6,7,8-tetrahydrofolate.

The protein belongs to the Fmt family.

The catalysed reaction is L-methionyl-tRNA(fMet) + (6R)-10-formyltetrahydrofolate = N-formyl-L-methionyl-tRNA(fMet) + (6S)-5,6,7,8-tetrahydrofolate + H(+). Attaches a formyl group to the free amino group of methionyl-tRNA(fMet). The formyl group appears to play a dual role in the initiator identity of N-formylmethionyl-tRNA by promoting its recognition by IF2 and preventing the misappropriation of this tRNA by the elongation apparatus. The polypeptide is Methionyl-tRNA formyltransferase (Thermotoga sp. (strain RQ2)).